Reading from the N-terminus, the 142-residue chain is Large ribosomal subunit protein uL13 (142 aa).

This sequence belongs to the universal ribosomal protein uL13 family. In terms of assembly, part of the 50S ribosomal subunit.

In terms of biological role, this protein is one of the early assembly proteins of the 50S ribosomal subunit, although it is not seen to bind rRNA by itself. It is important during the early stages of 50S assembly. The polypeptide is Large ribosomal subunit protein uL13 (Shewanella baltica (strain OS223)).